The primary structure comprises 278 residues: Digeranylgeranylglyceryl phosphate synthase (278 aa).

7 helical membrane passes run 12-32 (LKNC…ASNF), 34-54 (FGAL…CGFG), 92-112 (IMIF…MAVL), 129-149 (IIGN…GGIA), 199-219 (IYIS…PYLT), 221-241 (IFGI…LAGF), and 257-277 (SKNI…GSIF).

This sequence belongs to the UbiA prenyltransferase family. DGGGP synthase subfamily. Mg(2+) is required as a cofactor.

It localises to the cell membrane. It carries out the reaction sn-3-O-(geranylgeranyl)glycerol 1-phosphate + (2E,6E,10E)-geranylgeranyl diphosphate = 2,3-bis-O-(geranylgeranyl)-sn-glycerol 1-phosphate + diphosphate. It participates in membrane lipid metabolism; glycerophospholipid metabolism. Functionally, prenyltransferase that catalyzes the transfer of the geranylgeranyl moiety of geranylgeranyl diphosphate (GGPP) to the C2 hydroxyl of (S)-3-O-geranylgeranylglyceryl phosphate (GGGP). This reaction is the second ether-bond-formation step in the biosynthesis of archaeal membrane lipids. This chain is Digeranylgeranylglyceryl phosphate synthase, found in Methanococcus vannielii (strain ATCC 35089 / DSM 1224 / JCM 13029 / OCM 148 / SB).